The following is a 435-amino-acid chain: MRDSHPVEQTVGIEYYVTETDGTGGRLRDRPADFRVREREAFGADCRPLDADPGSYPHLVFRATLREWDTNDFASAVSNALGVSRERVSWAGTKDKHAVTTQLFSVRHDDAALPDLDGADIEPIGRAGRPVLFGDLAGNEFELVIRDPDRPEHAEATAAELCDFGGGEAGVPNYFGTQRFGSRRPITHRVGLDVLDGDWEAAAVRYVCESSEREPERTQEVREGIDADRDWAAAGERLPGSLRFERAIANRLAEGAESPDDYRAALEELPSNLQRMFVNAAQSYVFNRILSERLRRGLPFDEPVVGDVVCFSDSDGNPDPDRTQTVTESRLETVRRHCERGRAFVTAPLVGTETVFGDGEPAEITREVLADVDVSPTDFELPGEFGSSGTRRAVLVTTDLTVEQEPLTLSFSLPKGSYATVVAREFLKADPEALS.

Aspartate 95 (nucleophile) is an active-site residue. The 227-residue stretch at 170 to 396 folds into the TRUD domain; it reads GVPNYFGTQR…SSGTRRAVLV (227 aa).

It belongs to the pseudouridine synthase TruD family.

The catalysed reaction is uridine(13) in tRNA = pseudouridine(13) in tRNA. In terms of biological role, could be responsible for synthesis of pseudouridine from uracil-13 in transfer RNAs. The chain is Probable tRNA pseudouridine synthase D from Natronomonas pharaonis (strain ATCC 35678 / DSM 2160 / CIP 103997 / JCM 8858 / NBRC 14720 / NCIMB 2260 / Gabara) (Halobacterium pharaonis).